The primary structure comprises 466 residues: Argininosuccinate lyase (466 aa).

Residues serine 27, asparagine 114, and threonine 159 each coordinate 2-(N(omega)-L-arginino)succinate. The active-site Proton acceptor is the histidine 160. Catalysis depends on serine 281, which acts as the Proton donor. 4 residues coordinate 2-(N(omega)-L-arginino)succinate: asparagine 289, tyrosine 321, glutamine 326, and lysine 329.

The protein belongs to the lyase 1 family. Argininosuccinate lyase subfamily. In terms of assembly, homotetramer. Eye lens.

The catalysed reaction is 2-(N(omega)-L-arginino)succinate = fumarate + L-arginine. The protein operates within amino-acid biosynthesis; L-arginine biosynthesis; L-arginine from L-ornithine and carbamoyl phosphate: step 3/3. Functionally, delta crystallin, the principal crystallin in embryonic lens, is found only in birds and reptiles. This protein also functions as an enzymatically active argininosuccinate lyase. The sequence is that of Argininosuccinate lyase (ASL) from Anser anser anser (Western greylag goose).